The following is a 111-amino-acid chain: Small ribosomal subunit protein bS16 (111 aa).

Belongs to the bacterial ribosomal protein bS16 family.

The protein is Small ribosomal subunit protein bS16 of Rickettsia canadensis (strain McKiel).